Consider the following 490-residue polypeptide: Aspartyl/glutamyl-tRNA(Asn/Gln) amidotransferase subunit B (490 aa).

Belongs to the GatB/GatE family. GatB subfamily. Heterotrimer of A, B and C subunits.

It catalyses the reaction L-glutamyl-tRNA(Gln) + L-glutamine + ATP + H2O = L-glutaminyl-tRNA(Gln) + L-glutamate + ADP + phosphate + H(+). The enzyme catalyses L-aspartyl-tRNA(Asn) + L-glutamine + ATP + H2O = L-asparaginyl-tRNA(Asn) + L-glutamate + ADP + phosphate + 2 H(+). Functionally, allows the formation of correctly charged Asn-tRNA(Asn) or Gln-tRNA(Gln) through the transamidation of misacylated Asp-tRNA(Asn) or Glu-tRNA(Gln) in organisms which lack either or both of asparaginyl-tRNA or glutaminyl-tRNA synthetases. The reaction takes place in the presence of glutamine and ATP through an activated phospho-Asp-tRNA(Asn) or phospho-Glu-tRNA(Gln). The polypeptide is Aspartyl/glutamyl-tRNA(Asn/Gln) amidotransferase subunit B (Prochlorococcus marinus (strain AS9601)).